We begin with the raw amino-acid sequence, 211 residues long: Octanoyltransferase (211 aa).

Residues 32–211 form the BPL/LPL catalytic domain; the sequence is DHEPEIIYLV…IQTEFNKIFK (180 aa). Substrate is bound by residues 71 to 78, 145 to 147, and 158 to 160; these read RGGKFTFH, AIG, and GVA. The Acyl-thioester intermediate role is filled by Cys-176.

It belongs to the LipB family.

It localises to the cytoplasm. The catalysed reaction is octanoyl-[ACP] + L-lysyl-[protein] = N(6)-octanoyl-L-lysyl-[protein] + holo-[ACP] + H(+). The protein operates within protein modification; protein lipoylation via endogenous pathway; protein N(6)-(lipoyl)lysine from octanoyl-[acyl-carrier-protein]: step 1/2. Functionally, catalyzes the transfer of endogenously produced octanoic acid from octanoyl-acyl-carrier-protein onto the lipoyl domains of lipoate-dependent enzymes. Lipoyl-ACP can also act as a substrate although octanoyl-ACP is likely to be the physiological substrate. In Rickettsia massiliae (strain Mtu5), this protein is Octanoyltransferase.